Consider the following 341-residue polypeptide: HTH-type transcriptional repressor PurR (341 aa).

The HTH lacI-type domain occupies 2 to 56; that stretch reads ATIKDVAKRAGVSTTTVSHVINKTRFVADETKAAVWEAIKELHYSPSAVARSLKV. The H-T-H motif DNA-binding region spans 4–23; it reads IKDVAKRAGVSTTTVSHVIN. The DNA-binding element occupies 48–56; sequence SAVARSLKV. The hypoxanthine site is built by Tyr73, Arg190, Thr192, Phe221, and Asp275.

Homodimer.

The protein operates within purine metabolism; purine nucleotide biosynthesis [regulation]. Its function is as follows. Is the main repressor of the genes involved in the de novo synthesis of purine nucleotides, regulating purB, purC, purEK, purF, purHD, purL, purMN and guaBA expression. PurR is allosterically activated to bind its cognate DNA by binding the purine corepressors, hypoxanthine or guanine, thereby effecting transcription repression. The chain is HTH-type transcriptional repressor PurR from Edwardsiella ictaluri (strain 93-146).